We begin with the raw amino-acid sequence, 68 residues long: Coiled-coil domain-containing protein 179 (68 aa).

The segment at 11–68 (SQVNPEGPRQHHPSEVTERQLANKRIQNMQHLKKEKRRLNKRFSRPSPIPEPGLLWSS) is disordered. The segment covering 18-28 (PRQHHPSEVTE) has biased composition (basic and acidic residues). The stretch at 27–53 (TERQLANKRIQNMQHLKKEKRRLNKRF) forms a coiled coil. Basic residues predominate over residues 41-54 (HLKKEKRRLNKRFS).

In Homo sapiens (Human), this protein is Coiled-coil domain-containing protein 179 (CCDC179).